A 513-amino-acid polypeptide reads, in one-letter code: tRNA A64-2'-O-ribosylphosphate transferase (513 aa).

Its function is as follows. tRNA backbone modifying enzyme that mediates initiator/ elongator tRNA discrimination. This enzyme modifies exclusively the initiator tRNA in position 64 using 5'-phosphoribosyl-1'-pyrophosphate as the modification donor. Recognize the stem-loop IV region that is unique in eukaryotic cytoplasmic initiator tRNAs. The sequence is that of tRNA A64-2'-O-ribosylphosphate transferase (RIT1) from Saccharomyces cerevisiae (strain ATCC 204508 / S288c) (Baker's yeast).